The sequence spans 500 residues: L-arabinose isomerase (500 aa).

The Mn(2+) site is built by Glu306, Glu333, His349, and His448.

The protein belongs to the arabinose isomerase family. Mn(2+) is required as a cofactor.

The enzyme catalyses beta-L-arabinopyranose = L-ribulose. It participates in carbohydrate degradation; L-arabinose degradation via L-ribulose; D-xylulose 5-phosphate from L-arabinose (bacterial route): step 1/3. In terms of biological role, catalyzes the conversion of L-arabinose to L-ribulose. The polypeptide is L-arabinose isomerase (Koribacter versatilis (strain Ellin345)).